The following is a 351-amino-acid chain: Biotin synthase (351 aa).

The Radical SAM core domain occupies 48-265; sequence NKVRIHILDN…LCMFRLINPD (218 aa). C63, C67, and C70 together coordinate [4Fe-4S] cluster. The [2Fe-2S] cluster site is built by C107, C139, C199, and R269.

The protein belongs to the radical SAM superfamily. Biotin synthase family. As to quaternary structure, homodimer. Requires [4Fe-4S] cluster as cofactor. [2Fe-2S] cluster serves as cofactor.

It catalyses the reaction (4R,5S)-dethiobiotin + (sulfur carrier)-SH + 2 reduced [2Fe-2S]-[ferredoxin] + 2 S-adenosyl-L-methionine = (sulfur carrier)-H + biotin + 2 5'-deoxyadenosine + 2 L-methionine + 2 oxidized [2Fe-2S]-[ferredoxin]. The protein operates within cofactor biosynthesis; biotin biosynthesis; biotin from 7,8-diaminononanoate: step 2/2. Catalyzes the conversion of dethiobiotin (DTB) to biotin by the insertion of a sulfur atom into dethiobiotin via a radical-based mechanism. This chain is Biotin synthase, found in Leptospira interrogans serogroup Icterohaemorrhagiae serovar Lai (strain 56601).